The chain runs to 502 residues: Medium/long-chain-fatty-acid--CoA ligase FadD17 (502 aa).

It belongs to the ATP-dependent AMP-binding enzyme family.

The enzyme catalyses a medium-chain fatty acid + ATP + CoA = a medium-chain fatty acyl-CoA + AMP + diphosphate. The catalysed reaction is a long-chain fatty acid + ATP + CoA = a long-chain fatty acyl-CoA + AMP + diphosphate. It participates in lipid metabolism; fatty acid biosynthesis. Functionally, catalyzes the activation of medium/long-chain fatty acids as acyl-coenzyme A (acyl-CoA), which are then transferred to the multifunctional polyketide synthase (PKS) type III for further chain extension. The sequence is that of Medium/long-chain-fatty-acid--CoA ligase FadD17 (fadD17) from Mycobacterium bovis (strain ATCC BAA-935 / AF2122/97).